Consider the following 359-residue polypeptide: C-X-C chemokine receptor type 4 (359 aa).

Residues 1–23 (MEPISVSIYTSDNYSEEVGSGDY) form an important for chemokine binding and signaling region. Over 1 to 40 (MEPISVSIYTSDNYSEEVGSGDYDSNKEPCFRDENVHFNR) the chain is Extracellular. At Y9 the chain carries Sulfotyrosine. N13 carries an N-linked (GlcNAc...) asparagine glycan. Y14 is modified (sulfotyrosine). O-linked (Xyl...) (chondroitin sulfate) serine glycosylation is present at S20. Sulfotyrosine is present on Y23. Cystine bridges form between C30-C281 and C111-C193. Residues 41-65 (IFLPTIYFIIFLTGIVGNGLVILVM) form a helical membrane-spanning segment. The Cytoplasmic segment spans residues 66 to 79 (GYQKKLRSMTDKYR). A helical membrane pass occupies residues 80–101 (LHLSVADLLFVITLPFWAVDAM). A chemokine binding region spans residues 96–99 (WAVD). The Extracellular portion of the chain corresponds to 102–112 (ADWYFGKFLCK). A helical membrane pass occupies residues 113-132 (AVHIIYTVNLYSSVLILAFI). The tract at residues 115 to 119 (HIIYT) is chemokine binding. The Cytoplasmic portion of the chain corresponds to 133 to 156 (SLDRYLAIVHATNSQRPRKLLAEK). The Important for signaling motif lies at 135-137 (DRY). The segment at 137–149 (YLAIVHATNSQRP) is involved in dimerization; when bound to chemokine. A helical membrane pass occupies residues 157-176 (AVYVGVWIPALLLTIPDFIF). Topologically, residues 177–202 (ADVSQGDISQGDDRYICDRLYPDSLW) are extracellular. A chemokine binding, important for signaling region spans residues 193–197 (CDRLY). Residues 198–217 (PDSLWMVVFQFQHIMVGLIL) form an involved in dimerization region. Residues 203–223 (MVVFQFQHIMVGLILPGIVIL) traverse the membrane as a helical segment. At 224 to 248 (SCYCIIISKLSHSKGHQKRKALKTT) the chain is on the cytoplasmic side. A helical membrane pass occupies residues 249–268 (VILILAFFACWLPYYVGISI). The Extracellular segment spans residues 269 to 289 (DSFILLGVIKQGCDFESIVHK). The interval 273-275 (LLG) is involved in dimerization. A helical membrane pass occupies residues 290-309 (WISITEALAFFHCCLNPILY). Topologically, residues 310–359 (AFLGAKFKSSAQHALNSMSRGSSLKILSKGKRGGHSSVSTESESSSFHSS) are cytoplasmic. 2 positions are modified to phosphoserine: S326 and S328. Phosphoserine; by PKC and GRK6 occurs at positions 331 and 332. Residues 335–359 (ILSKGKRGGHSSVSTESESSSFHSS) are disordered. At S337 the chain carries Phosphoserine; by GRK6. K338 is covalently cross-linked (Glycyl lysine isopeptide (Lys-Gly) (interchain with G-Cter in ubiquitin)). Over residues 344-359 (HSSVSTESESSSFHSS) the composition is skewed to low complexity. S346 is subject to Phosphoserine; by GRK6. Residues S355 and S358 each carry the phosphoserine modification.

Belongs to the G-protein coupled receptor 1 family. As to quaternary structure, monomer. Can form homodimers. Interacts with CD164. Interacts with ARRB2; the interaction is dependent on the C-terminal phosphorylation of CXCR4 and allows activation of MAPK1 and MAPK3. Interacts with ARR3; the interaction is dependent on the C-terminal phosphorylation of CXCR4 and modulates calcium mobilization. Interacts with RNF113A; the interaction, enhanced by CXCL12, promotes CXCR4 ubiquitination and subsequent degradation. Interacts (via the cytoplasmic C-terminal) with ITCH (via the WW domains I and II); the interaction, enhanced by CXCL12, promotes CXCR4 ubiquitination and leads to its degradation. Interacts with extracellular ubiquitin. Interacts with DBN1; this interaction is enhanced by antigenic stimulation. Following LPS binding, may form a complex with GDF5, HSP90AA1 and HSPA8. In terms of processing, phosphorylated on agonist stimulation. Rapidly phosphorylated on serine and threonine residues in the C-terminal. Phosphorylation at Ser-331 and Ser-332 leads to recruitment of ITCH, ubiquitination and protein degradation. Ubiquitinated after ligand binding, leading to its degradation. Ubiquitinated by ITCH at the cell membrane on agonist stimulation. The ubiquitin-dependent mechanism, endosomal sorting complex required for transport (ESCRT), then targets CXCR4 for lysosomal degradation. This process is dependent also on prior Ser-/Thr-phosphorylation in the C-terminal of CXCR4. Also binding of ARRB1 to STAM negatively regulates CXCR4 sorting to lysosomes though modulating ubiquitination of SFR5S. Post-translationally, sulfation is required for efficient binding of CXCL12/SDF-1alpha and promotes its dimerization. In terms of processing, O- and N-glycosylated. N-glycosylation can mask coreceptor function. The O-glycosylation chondroitin sulfate attachment does not affect interaction with CXCL12/SDF-1alpha nor its coreceptor activity. In terms of tissue distribution, lymphocytes, macrophages, neutrophils, microglial cells and astrocytes. Found in spleen, thymus, bone marrow, lymph nodes and, at lower levels in brain, small intestine, stomach and kidney. CXCR4-A is predominant in all tissues tested. During embryonic development, high levels are detected in the endothelium of developing blood vessels and in many regions of the developing brain including the olfactory epithelium, olfactory bulb, hippocampus, cerebellum and spinal cord.

It is found in the cell membrane. It localises to the cell junction. The protein localises to the early endosome. The protein resides in the late endosome. Its subcellular location is the lysosome. In terms of biological role, receptor for the C-X-C chemokine CXCL12/SDF-1 that transduces a signal by increasing intracellular calcium ion levels and enhancing MAPK1/MAPK3 activation. Involved in the AKT signaling cascade. Plays a role in regulation of cell migration, e.g. during wound healing. Acts as a receptor for extracellular ubiquitin; leading to enhanced intracellular calcium ions and reduced cellular cAMP levels. Binds bacterial lipopolysaccharide (LPS) et mediates LPS-induced inflammatory response, including TNF secretion by monocytes. Involved in hematopoiesis and in cardiac ventricular septum formation. Also plays an essential role in vascularization of the gastrointestinal tract, probably by regulating vascular branching and/or remodeling processes in endothelial cells. Involved in cerebellar development. In the CNS, could mediate hippocampal-neuron survival. This chain is C-X-C chemokine receptor type 4 (Cxcr4), found in Mus musculus (Mouse).